The chain runs to 280 residues: Thiamine-phosphate synthase (280 aa).

The interval 1–64 (MGWSGSPLTL…ATGRGGLRMT (64 aa)) is disordered. Residues 42-55 (GRGELRSRERRGEA) are compositionally biased toward basic and acidic residues. 4-amino-2-methyl-5-(diphosphooxymethyl)pyrimidine contacts are provided by residues 104–108 (QLRCK) and N141. 2 residues coordinate Mg(2+): D142 and D161. S179 serves as a coordination point for 4-amino-2-methyl-5-(diphosphooxymethyl)pyrimidine. A 2-[(2R,5Z)-2-carboxy-4-methylthiazol-5(2H)-ylidene]ethyl phosphate-binding site is contributed by 205–207 (TPT). K208 lines the 4-amino-2-methyl-5-(diphosphooxymethyl)pyrimidine pocket. Residue G236 participates in 2-[(2R,5Z)-2-carboxy-4-methylthiazol-5(2H)-ylidene]ethyl phosphate binding.

This sequence belongs to the thiamine-phosphate synthase family. It depends on Mg(2+) as a cofactor.

It catalyses the reaction 2-[(2R,5Z)-2-carboxy-4-methylthiazol-5(2H)-ylidene]ethyl phosphate + 4-amino-2-methyl-5-(diphosphooxymethyl)pyrimidine + 2 H(+) = thiamine phosphate + CO2 + diphosphate. The enzyme catalyses 2-(2-carboxy-4-methylthiazol-5-yl)ethyl phosphate + 4-amino-2-methyl-5-(diphosphooxymethyl)pyrimidine + 2 H(+) = thiamine phosphate + CO2 + diphosphate. The catalysed reaction is 4-methyl-5-(2-phosphooxyethyl)-thiazole + 4-amino-2-methyl-5-(diphosphooxymethyl)pyrimidine + H(+) = thiamine phosphate + diphosphate. It functions in the pathway cofactor biosynthesis; thiamine diphosphate biosynthesis; thiamine phosphate from 4-amino-2-methyl-5-diphosphomethylpyrimidine and 4-methyl-5-(2-phosphoethyl)-thiazole: step 1/1. Functionally, condenses 4-methyl-5-(beta-hydroxyethyl)thiazole monophosphate (THZ-P) and 2-methyl-4-amino-5-hydroxymethyl pyrimidine pyrophosphate (HMP-PP) to form thiamine monophosphate (TMP). The chain is Thiamine-phosphate synthase from Deinococcus radiodurans (strain ATCC 13939 / DSM 20539 / JCM 16871 / CCUG 27074 / LMG 4051 / NBRC 15346 / NCIMB 9279 / VKM B-1422 / R1).